The sequence spans 173 residues: Crossover junction endodeoxyribonuclease RuvC (173 aa).

Catalysis depends on residues Asp8, Glu67, and Asp139. Residues Asp8, Glu67, and Asp139 each contribute to the Mg(2+) site.

The protein belongs to the RuvC family. Homodimer which binds Holliday junction (HJ) DNA. The HJ becomes 2-fold symmetrical on binding to RuvC with unstacked arms; it has a different conformation from HJ DNA in complex with RuvA. In the full resolvosome a probable DNA-RuvA(4)-RuvB(12)-RuvC(2) complex forms which resolves the HJ. Requires Mg(2+) as cofactor.

The protein localises to the cytoplasm. It carries out the reaction Endonucleolytic cleavage at a junction such as a reciprocal single-stranded crossover between two homologous DNA duplexes (Holliday junction).. Its function is as follows. The RuvA-RuvB-RuvC complex processes Holliday junction (HJ) DNA during genetic recombination and DNA repair. Endonuclease that resolves HJ intermediates. Cleaves cruciform DNA by making single-stranded nicks across the HJ at symmetrical positions within the homologous arms, yielding a 5'-phosphate and a 3'-hydroxyl group; requires a central core of homology in the junction. The consensus cleavage sequence is 5'-(A/T)TT(C/G)-3'. Cleavage occurs on the 3'-side of the TT dinucleotide at the point of strand exchange. HJ branch migration catalyzed by RuvA-RuvB allows RuvC to scan DNA until it finds its consensus sequence, where it cleaves and resolves the cruciform DNA. The protein is Crossover junction endodeoxyribonuclease RuvC of Vibrio campbellii (strain ATCC BAA-1116).